Here is a 117-residue protein sequence, read N- to C-terminus: Probable prefoldin subunit 1 (117 aa).

The protein belongs to the prefoldin subunit beta family. As to quaternary structure, heterohexamer of two PFD-alpha type and four PFD-beta type subunits.

It is found in the cytoplasm. Binds specifically to cytosolic chaperonin (c-CPN) and transfers target proteins to it. Binds to nascent polypeptide chain and promotes folding in an environment in which there are many competing pathways for nonnative proteins. Has a role in gonadogenesis. The protein is Probable prefoldin subunit 1 (pfd-1) of Caenorhabditis briggsae.